The following is a 578-amino-acid chain: NADPH oxidase 4 (578 aa).

Residues 1–16 (MAVSWRSWLANEGVKH) are Cytoplasmic-facing. A helical membrane pass occupies residues 17-37 (LCLFIWLSMNVLLFWKTFLLY). Residues 38–62 (NQGPEYHYLHQMLGLGLCLSRASAS) are Extracellular-facing. The 246-residue stretch at 58–303 (RASASVLNLN…YCAERLYRYI (246 aa)) folds into the Ferric oxidoreductase domain. A helical membrane pass occupies residues 63–83 (VLNLNCSLILLPMCRTLLAYL). The Cytoplasmic segment spans residues 84 to 103 (RGSQKVPSRRTRRLLDKSRT). A helical membrane pass occupies residues 104–124 (FHITCGVTICIFSGVHVAAHL). Residues 125 to 154 (VNALNFSVNYSEDFVELNAARYRDEDPRKL) are Extracellular-facing. N133 is a glycosylation site (N-linked (GlcNAc...) asparagine). The helical transmembrane segment at 155–175 (LFTTVPGLTGVCMVVVLFLMI) threads the bilayer. Residues 176–188 (TASTYAIRVSNYD) lie on the Cytoplasmic side of the membrane. Residues 189–209 (IFWYTHNLFFVFYMLLTLHVS) traverse the membrane as a helical segment. Residues 210–424 (GGLLKYQTNL…SPFEESLNYE (215 aa)) are Extracellular-facing. The interval 218 to 273 (NLDTHPPGCISLNRTSSQNISLPEYFSEHFHEPFPEGFSKPEEFTQNTFVKICMEE) is E-loop; essential for H2O2 generating catalytic activity. A glycan (N-linked (GlcNAc...) asparagine) is linked at N230. Residues 248–575 (HEPFPEGFSK…YGTRFEYNKE (328 aa)) are mediates interaction with TLR4. Positions 304-419 (RSNKPVTIIS…DGPFGSPFEE (116 aa)) constitute an FAD-binding FR-type domain. The chain crosses the membrane as a helical span at residues 425–445 (VSLCVAGGIGVTPFASILNTL). Topologically, residues 446 to 578 (LDDWKPYKLR…RFEYNKESFS (133 aa)) are cytoplasmic.

Interacts with, relocalizes and stabilizes CYBA/p22phox. Interacts with TLR4. Interacts with protein disulfide isomerase. Interacts with PPP1R15A. Interacts with LRRC8A; this interaction prevents the ubiquitin-mediated degradation of LRRC8A. Heme is required as a cofactor. In terms of processing, N-glycosylation is required for the function.

The protein resides in the cytoplasm. It localises to the endoplasmic reticulum membrane. Its subcellular location is the cell membrane. It is found in the cell junction. The protein localises to the focal adhesion. The protein resides in the nucleus. The catalysed reaction is NADPH + 2 O2 = 2 superoxide + NADP(+) + H(+). It catalyses the reaction NADPH + O2 + H(+) = H2O2 + NADP(+). Its activity is regulated as follows. Activated by insulin. Inhibited by diphenylene iodonium. Inhibited by plumbagin. Activated by phorbol 12-myristate 13-acetate (PMA). Functionally, NADPH oxidase that catalyzes predominantly the reduction of oxygen to H2O2. Can also catalyze to a smaller extent, the reduction of oxygen to superoxide. May function as an oxygen sensor regulating the KCNK3/TASK-1 potassium channel and HIF1A activity. May regulate insulin signaling cascade. May play a role in apoptosis, bone resorption and lipolysaccharide-mediated activation of NFKB. May produce superoxide in the nucleus and play a role in regulating gene expression upon cell stimulation. Promotes ferroptosis, reactive oxygen species production and reduced glutathione (GSH) levels by activating NLRP3 inflammasome activation and cytokine release. The polypeptide is NADPH oxidase 4 (NOX4) (Pongo abelii (Sumatran orangutan)).